The chain runs to 107 residues: Large ribosomal subunit protein uL23 (107 aa).

Belongs to the universal ribosomal protein uL23 family. In terms of assembly, part of the 50S ribosomal subunit. Contacts protein L29, and trigger factor when it is bound to the ribosome.

Its function is as follows. One of the early assembly proteins it binds 23S rRNA. One of the proteins that surrounds the polypeptide exit tunnel on the outside of the ribosome. Forms the main docking site for trigger factor binding to the ribosome. The polypeptide is Large ribosomal subunit protein uL23 (Rhodopirellula baltica (strain DSM 10527 / NCIMB 13988 / SH1)).